A 464-amino-acid polypeptide reads, in one-letter code: MSPPSVLLLHSRIPLQPRPFRMNSRAAPSRVVVCSVASTEGFISAAPILLPDGPWKQVEGGVTAAKGFKAAGIYSGLRAKGEKPDLALVACDVDATVAGAFTTNVVAAAPVLYCKHVLSTSKTGRAVLINAGQANAATGDLGYQDAVDSADAVAKLLNVSTDNILIQSTGVIGQRIKKEALLNSLPRLVGSLSSSVQGANSAAVAITTTDLVSKSIAVQTEIGGVAIRIGGMAKGSGMIHPNMATMLGVLTTDAQVSSDVWREMIRMSVSRSFNQITVDGDTSTNDCVIAMASGLSGLSGIQSLDSIEAQQFQACLDAVMQSLAKSIAWDGEGATCLIEVTVSGANNEAEAAKIARSVASSSLVKAAIFGRDPNWGRIACSVGYSGIQFDANRLDISLGVIPLMKNGQPLPFDRLTASKYLKDAGDAHGTVNIDISVGSGGGNGKAWGCDLSYKYVEINAEYTT.

Substrate-binding residues include threonine 208, lysine 234, threonine 245, glutamate 332, asparagine 459, and threonine 464. Catalysis depends on threonine 245, which acts as the Nucleophile.

The protein belongs to the ArgJ family. In terms of assembly, heterodimer of an alpha and a beta chain.

The protein localises to the plastid. The protein resides in the chloroplast. It catalyses the reaction N(2)-acetyl-L-ornithine + L-glutamate = N-acetyl-L-glutamate + L-ornithine. The catalysed reaction is L-glutamate + acetyl-CoA = N-acetyl-L-glutamate + CoA + H(+). Its pathway is amino-acid biosynthesis; L-arginine biosynthesis; L-ornithine and N-acetyl-L-glutamate from L-glutamate and N(2)-acetyl-L-ornithine (cyclic): step 1/1. It participates in amino-acid biosynthesis; L-arginine biosynthesis; N(2)-acetyl-L-ornithine from L-glutamate: step 1/4. Functionally, catalyzes two activities which are involved in the cyclic version of arginine biosynthesis: the synthesis of acetylglutamate from glutamate and acetyl-CoA, and of ornithine by transacetylation between acetylornithine and glutamate. The chain is Arginine biosynthesis bifunctional protein ArgJ, chloroplastic from Zea mays (Maize).